A 235-amino-acid polypeptide reads, in one-letter code: Intron-encoded endonuclease I-SceI (235 aa).

This sequence belongs to the LAGLIDADG endonuclease family. In terms of assembly, monomer. It depends on Mg(2+) as a cofactor.

It localises to the mitochondrion. In terms of biological role, mitochondrial DNA endonuclease involved in intron homing. It introduces a specific double-strand break in the DNA of the 21S rRNA gene and thus mediates the insertion of an intron, containing its own coding sequence (group I intron), into an intronless gene. Specifically recognizes and cleaves the sequence 5'-TAGGGATAACAGGGTAAT-3'. In Saccharomyces cerevisiae (strain ATCC 204508 / S288c) (Baker's yeast), this protein is Intron-encoded endonuclease I-SceI (SCEI).